The chain runs to 946 residues: Glucoamylase 1 (946 aa).

The N-terminal stretch at 1 to 20 (MKLLSKVFVTALGLTSIVNA) is a signal peptide. N-linked (GlcNAc...) asparagine glycosylation is found at Asn51, Asn68, Asn97, Asn187, Asn244, Asn373, Asn393, Asn406, and Asn437. Catalysis depends on residues Asp462 and Glu465. N-linked (GlcNAc...) asparagine glycosylation is present at Asn505. The segment covering 517-532 (AATKTTTTTSSSTSTS) has biased composition (low complexity). A disordered region spans residues 517 to 541 (AATKTTTTTSSSTSTSIDGKNTLAP). A glycan (N-linked (GlcNAc...) asparagine) is linked at Asn570. The Proton donor role is filled by Asp628. Asn704, Asn772, Asn801, Asn895, and Asn912 each carry an N-linked (GlcNAc...) asparagine glycan.

The protein belongs to the glycosyl hydrolase 31 family. Post-translationally, the N-terminus is blocked.

The protein resides in the secreted. It is found in the cell wall. Its subcellular location is the membrane. It carries out the reaction Hydrolysis of terminal (1-&gt;4)-linked alpha-D-glucose residues successively from non-reducing ends of the chains with release of beta-D-glucose.. This is Glucoamylase 1 (GAM1) from Candida albicans (strain SC5314 / ATCC MYA-2876) (Yeast).